The following is a 1011-amino-acid chain: RAS protein activator like-3 (1011 aa).

The interval 1–38 is disordered; it reads MDPPSPSRTSQTQPTATSPLTSYRWHTGGGGEKAAGGF. A compositionally biased stretch (low complexity) spans 7 to 22; that stretch reads SRTSQTQPTATSPLTS. A phosphoserine mark is found at Ser-18 and Ser-51. Disordered stretches follow at residues 52–136, 151–197, and 209–230; these read HQEP…PVWD, GGEE…GPNQ, and KEKKKARLEPRDGPPSALGSRE. Residues 81 to 95 are compositionally biased toward basic residues; it reads SRLRLSKALWGRHKN. Residues 100 to 117 show a composition bias toward acidic residues; the sequence is PDPEPEQEAPELEPEPEL. Residues 118-131 show a composition bias toward pro residues; that stretch reads EPPTPQIPEAPTPN. Residues Ser-164, Ser-166, Ser-167, and Ser-170 each carry the phosphoserine modification. Residues 179-190 are compositionally biased toward basic and acidic residues; it reads RDPDRMPGKTEP. The 97-residue stretch at 197–293 folds into the PH domain; the sequence is QVHNVRGLLK…WIEDLRRQFQ (97 aa). Phosphoserine occurs at positions 224, 228, and 231. Residue Thr-234 is modified to Phosphothreonine. Residues 284–404 enclose the C2 domain; it reads WIEDLRRQFQ…APAAGLERWF (121 aa). The region spanning 474–682 is the Ras-GAP domain; it reads GRAQALVTDL…PAMQCFLDQV (209 aa). Disordered stretches follow at residues 756–885 and 987–1011; these read QVHS…LGTH and LSPRTRGSWSQPQPLKAPCLNGDTT. Phosphoserine is present on residues Ser-787 and Ser-790. A compositionally biased stretch (basic and acidic residues) spans 792 to 808; it reads RRSESWARPRPDEERPL. Polar residues-rich tracts occupy residues 871–882 and 987–999; these read QMDQPQDRNQAL and LSPRTRGSWSQPQ. Residues 888-988 adopt a coiled-coil conformation; it reads VNKLAELQCE…RDAVQSLQLS (101 aa). The residue at position 988 (Ser-988) is a Phosphoserine.

In terms of tissue distribution, predominantly expressed in cells of hematopoietic lineages.

Its subcellular location is the cytoplasm. It is found in the cell cortex. In terms of biological role, functions as a Ras GTPase-activating protein. Plays an important role in the expansion and functions of natural killer T (NKT) cells in the liver by negatively regulating RAS activity and the down-stream ERK signaling pathway. The sequence is that of RAS protein activator like-3 (RASAL3) from Homo sapiens (Human).